The primary structure comprises 261 residues: Sepiapterin reductase (261 aa).

Residues 16–22 (GASRGFG), 44–45 (RT), and 71–72 (DL) each bind NADP(+). Substrate is bound by residues 158 to 159 (SL) and Tyr171. Residue Lys175 participates in NADP(+) binding. Gly200 lines the substrate pocket. NADP(+) is bound at residue 202-207 (LDTDMH). Asp258 contacts substrate.

This sequence belongs to the sepiapterin reductase family. As to quaternary structure, homodimer.

It is found in the cytoplasm. The enzyme catalyses L-erythro-7,8-dihydrobiopterin + NADP(+) = L-sepiapterin + NADPH + H(+). It carries out the reaction (6R)-L-erythro-5,6,7,8-tetrahydrobiopterin + 2 NADP(+) = 6-pyruvoyl-5,6,7,8-tetrahydropterin + 2 NADPH + 2 H(+). In terms of biological role, catalyzes the final one or two reductions in tetra-hydrobiopterin biosynthesis to form 5,6,7,8-tetrahydrobiopterin. This chain is Sepiapterin reductase (spr), found in Xenopus tropicalis (Western clawed frog).